The chain runs to 45 residues: RDCKSDSHKFHGACFSDTNCANVCQTEGFTRGKCDGIHCHCIKDC.

Disulfide bonds link Cys3/Cys45, Cys14/Cys34, Cys20/Cys39, and Cys24/Cys41.

Functionally, plant defense peptide. The sequence is that of Defensin Tk-AMP-D3 from Triticum kiharae (Wheat).